The chain runs to 271 residues: Ribosomal RNA small subunit methyltransferase A (271 aa).

Positions 11, 13, 38, 58, 86, and 101 each coordinate S-adenosyl-L-methionine.

It belongs to the class I-like SAM-binding methyltransferase superfamily. rRNA adenine N(6)-methyltransferase family. RsmA subfamily.

The protein localises to the cytoplasm. The catalysed reaction is adenosine(1518)/adenosine(1519) in 16S rRNA + 4 S-adenosyl-L-methionine = N(6)-dimethyladenosine(1518)/N(6)-dimethyladenosine(1519) in 16S rRNA + 4 S-adenosyl-L-homocysteine + 4 H(+). Its function is as follows. Specifically dimethylates two adjacent adenosines (A1518 and A1519) in the loop of a conserved hairpin near the 3'-end of 16S rRNA in the 30S particle. May play a critical role in biogenesis of 30S subunits. The polypeptide is Ribosomal RNA small subunit methyltransferase A (Helicobacter pylori (strain G27)).